A 102-amino-acid chain; its full sequence is MKSSPHLVLILCLQAALVMGVFAALAKENAMVESKAIDINPGQLKCCTNCNFSFSGLYTCDDVKKDCDPVCKKCVVAVHASYSGNNKFRCTDTFLGMCGPKC.

The N-terminal stretch at 1-15 (MKSSPHLVLILCLQA) is a signal peptide. Disulfide bonds link Cys-46–Cys-102, Cys-47–Cys-60, Cys-50–Cys-98, Cys-67–Cys-74, and Cys-71–Cys-90.

This sequence belongs to the Bowman-Birk serine protease inhibitor family.

The protein is Bowman-Birk type wound-induced proteinase inhibitor WIP1 (WIP1) of Zea mays (Maize).